Reading from the N-terminus, the 335-residue chain is MAKRYLLDFEKPLVELEKQIEQIKELARDSEVDVSQQLLQLETLATRRREEIFKSLTPAQKIQVARHPQRPSTLDFVQMFCDDWIELHGDRNGGDDMALIGGIGSINNRPVLMLGHQKGRDTKENVVRNFGMAKPGGYRKALRLMQHADRFSLPILTFIDTPGAYAGLTAEEQGQGEAIARNLREMFGLTVPIVATVIGEGGSGGALGIGVADRLLMFEHSVYTVASPEACASILWRDAAKAPEAASALKITGKDLLKLGIIDEVLPEPSGGNNWAPLDAGNTLKEAIEKHLDTLLQMTKDELIEERYKKFRVLGKFIEANNIEEIYSEIPPQSE.

In terms of domain architecture, CoA carboxyltransferase C-terminal spans 40 to 294 (QLETLATRRR…KEAIEKHLDT (255 aa)).

Belongs to the AccA family. Acetyl-CoA carboxylase is a heterohexamer composed of biotin carboxyl carrier protein (AccB), biotin carboxylase (AccC) and two subunits each of ACCase subunit alpha (AccA) and ACCase subunit beta (AccD).

Its subcellular location is the cytoplasm. The enzyme catalyses N(6)-carboxybiotinyl-L-lysyl-[protein] + acetyl-CoA = N(6)-biotinyl-L-lysyl-[protein] + malonyl-CoA. Its pathway is lipid metabolism; malonyl-CoA biosynthesis; malonyl-CoA from acetyl-CoA: step 1/1. Functionally, component of the acetyl coenzyme A carboxylase (ACC) complex. First, biotin carboxylase catalyzes the carboxylation of biotin on its carrier protein (BCCP) and then the CO(2) group is transferred by the carboxyltransferase to acetyl-CoA to form malonyl-CoA. This Prochlorococcus marinus (strain MIT 9312) protein is Acetyl-coenzyme A carboxylase carboxyl transferase subunit alpha.